A 158-amino-acid polypeptide reads, in one-letter code: G-protein-signaling modulator 3 (158 aa).

Positions 1–53 (MEAERPQEDGEQSLPQDDQGWPPVNSTARPWRSAPPSPPPPGTRHTALGPRSG) are disordered. S33 and S37 each carry phosphoserine. The segment covering 33 to 42 (SAPPSPPPPG) has biased composition (pro residues). The span at 43–53 (TRHTALGPRSG) shows a compositional bias: low complexity. 2 positions are modified to phosphoserine: S54 and S57. T60 bears the Phosphothreonine mark. One can recognise a GoLoco 1 domain in the interval 60 to 82 (TELLLDLVAEAQSRRLEEQRAAF). The tract at residues 78–97 (QRAAFHTPKVPPSLAPTPPR) is disordered. A compositionally biased stretch (pro residues) spans 86 to 96 (KVPPSLAPTPP). GoLoco domains follow at residues 102 to 124 (KEQL…RSDP) and 130 to 153 (GQEL…RSRP).

The protein localises to the cytoplasm. Interacts with subunit of G(i) alpha proteins and regulates the activation of G(i) alpha proteins. The protein is G-protein-signaling modulator 3 (Gpsm3) of Rattus norvegicus (Rat).